The chain runs to 352 residues: C-C chemokine receptor type 5 (352 aa).

Residues 1-30 (MDYQVSSPTYDIDYYTSEPCQKVNVKQIAA) are Extracellular-facing. Tyr3 carries the sulfotyrosine modification. O-linked (GalNAc...) serine glycosylation is found at Ser6 and Ser7. Residues Tyr10, Tyr14, and Tyr15 each carry the sulfotyrosine modification. Intrachain disulfides connect Cys20/Cys269 and Cys101/Cys178. A helical membrane pass occupies residues 31–58 (RLLPPLYSLVFIFGFVGNILVVLILINC). At 59–68 (KRLKSMTDIY) the chain is on the cytoplasmic side. A helical membrane pass occupies residues 69–89 (LLNLAISDLFFLLTVPFWAHY). Topologically, residues 90–102 (AAAQWDFGNTMCQ) are extracellular. A helical membrane pass occupies residues 103 to 124 (LLTGLYFIGFFSGIFFIILLTI). Residues 125–141 (DRYLAIVHAVFALKART) lie on the Cytoplasmic side of the membrane. Residues 142–166 (VTFGVVTSVITWVVAVFASLPGIIF) form a helical membrane-spanning segment. At 167–198 (TRSQREGLHYTCSSHFPYSQYQFWKNFQTLKI) the chain is on the extracellular side. The helical transmembrane segment at 199-218 (VILGLVLPLLVMVICYSGIL) threads the bilayer. At 219 to 235 (KTLLRCRNEKKRHRAVR) the chain is on the cytoplasmic side. The helical transmembrane segment at 236-260 (LIFTIMIVYFLFWAPYNIVLLLNTF) threads the bilayer. Residues 261–277 (QEFFGLNNCSSSNRLDQ) are Extracellular-facing. The helical transmembrane segment at 278–301 (AMQVTETLGMTHCCINPIIYAFVG) threads the bilayer. Over 302–352 (EKFRNYLLVFFQKHIAKRFCKCCYIFQQEAPERASSVYTRSTGEQEISVGL) the chain is Cytoplasmic. 3 S-palmitoyl cysteine lipidation sites follow: Cys321, Cys323, and Cys324. Phosphoserine; by BARK1 is present on residues Ser336, Ser337, Ser342, and Ser349.

Belongs to the G-protein coupled receptor 1 family. In terms of assembly, interacts with PRAF2. Efficient ligand binding to CCL3/MIP-1alpha and CCL4/MIP-1beta requires sulfation, O-glycosylation and sialic acid modifications. Glycosylation on Ser-6 is required for efficient binding of CCL4. Interacts with GRK2. Interacts with ARRB1 and ARRB2. Interacts with CNIH4. Interacts with S100A4; this interaction stimulates T-lymphocyte chemotaxis. Post-translationally, sulfated on at least 2 of the N-terminal tyrosines. Sulfation is required for efficient binding of the chemokines, CCL3 and CCL4. Palmitoylation in the C-terminal is important for cell surface expression. In terms of processing, phosphorylation on serine residues in the C-terminal is stimulated by binding CC chemokines especially by APO-RANTES. Post-translationally, O-glycosylated, but not N-glycosylated. Ser-6 appears to be the major site even if Ser-7 may be also O-glycosylated. Also sialylated glycans present which contribute to chemokine binding. Thr-16 and Ser-17 may also be glycosylated and, if so, with small moieties such as a T-antigen.

It localises to the cell membrane. Its function is as follows. Receptor for a number of inflammatory CC-chemokines including CCL3/MIP-1-alpha, CCL4/MIP-1-beta and RANTES and subsequently transduces a signal by increasing the intracellular calcium ion level. May play a role in the control of granulocytic lineage proliferation or differentiation. Participates in T-lymphocyte migration to the infection site by acting as a chemotactic receptor. The protein is C-C chemokine receptor type 5 (CCR5) of Rhinopithecus bieti (Black snub-nosed monkey).